Reading from the N-terminus, the 1062-residue chain is Platelet-derived growth factor receptor alpha (1062 aa).

Residues 1–27 (MFPPSSAPLLLPQLEELVVPLHTAFTL) form the signal peptide. Ig-like C2-type domains lie at 28 to 96 (TCQG…VYVP), 91 to 184 (IYVY…VHGW), 190 to 281 (LHVE…KQIA), 287 to 381 (SEFM…RTVS), and 389 to 493 (PAVI…IKLV). Topologically, residues 28–504 (TCQGEATIAW…NGPHPELTVA (477 aa)) are extracellular. Cysteine 29 and cysteine 74 are disulfide-bonded. Asparagine 79 and asparagine 132 each carry an N-linked (GlcNAc...) asparagine glycan. 2 cysteine pairs are disulfide-bonded: cysteine 124/cysteine 165 and cysteine 211/cysteine 265. Asparagine 273, asparagine 333, asparagine 366, asparagine 433, and asparagine 444 each carry an N-linked (GlcNAc...) asparagine glycan. A disulfide bond links cysteine 410 and cysteine 477. A helical transmembrane segment spans residues 505–525 (AAVLVLLVIVIISLIVLVVIW). The Cytoplasmic portion of the chain corresponds to 526-1062 (KQKPRYEIRW…CSDLVEDSFL (537 aa)). Residues tyrosine 548 and tyrosine 550 each carry the phosphotyrosine; by autocatalysis modification. The region spanning 569–945 (LVLGRILGSG…HYERVNHEFL (377 aa)) is the Protein kinase domain. Residues 575-583 (LGSGAFGKV) and lysine 603 each bind ATP. Tyrosine 697, tyrosine 708, tyrosine 719, tyrosine 731, and tyrosine 739 each carry phosphotyrosine; by autocatalysis. A disordered region spans residues 734–754 (LQGSNYDHPPSQKGSNDGEMD). Aspartate 793 acts as the Proton acceptor in catalysis. Tyrosine 824 and tyrosine 963 each carry phosphotyrosine; by autocatalysis. The segment covering 975 to 986 (KDRESGFDEQRL) has biased composition (basic and acidic residues). The segment at 975–1034 (KDRESGFDEQRLSSDSGYIIPLPDLDPISDEEYGKRNRHSSQTSEESAIETGSSSSTFAK) is disordered. Tyrosine 992 carries the phosphotyrosine; by autocatalysis modification. Positions 1014 to 1032 (SSQTSEESAIETGSSSSTF) are enriched in polar residues.

The protein belongs to the protein kinase superfamily. Tyr protein kinase family. CSF-1/PDGF receptor subfamily. As to quaternary structure, interacts with homodimeric pdgfa, pdgfb and pdgfc, and with heterodimers formed by pdgfa and pdgfb. monomer in the absence of bound ligand. Interaction with dimeric pdgfa, pdgfb and/or pdgfc leads to receptor dimerization, where both pdgfra homodimers and heterodimers with pdgfrb are observed. In terms of processing, ubiquitinated, leading to its degradation. Post-translationally, autophosphorylated on tyrosine residues upon ligand binding. Autophosphorylation occurs in trans, i.e. one subunit of the dimeric receptor phosphorylates tyrosine residues on the other subunit.

It is found in the cell membrane. The catalysed reaction is L-tyrosyl-[protein] + ATP = O-phospho-L-tyrosyl-[protein] + ADP + H(+). Present in an inactive conformation in the absence of bound ligand. Binding of pdgfa and/or pdgfb leads to dimerization and activation by autophosphorylation on tyrosine residues. Its function is as follows. Tyrosine-protein kinase that acts as a cell-surface receptor for pdgfa, pdgfb and pdgfc and plays an essential role in the regulation of embryonic development, cell proliferation, survival and chemotaxis. Depending on the context, promotes or inhibits cell proliferation and cell migration. Plays an important role in the differentiation of bone marrow-derived mesenchymal stem cells. Required for normal skeleton development. Required for normal development of the gastrointestinal tract. Plays a role in cell migration and chemotaxis in wound healing. Plays a role in platelet activation, secretion of agonists from platelet granules, and in thrombin-induced platelet aggregation. Binding of its cognate ligands - homodimeric pdgfa, homodimeric pdgfb, heterodimers formed by pdgfa and pdgfb or homodimeric pdgfc -leads to the activation of several signaling cascades; the response depends on the nature of the bound ligand and is modulated by the formation of heterodimers between pdgfra and pdgfrb. Phosphorylates pik3r1, plcg1, and ptpn11. Activation of plcg1 leads to the production of the cellular signaling molecules diacylglycerol and inositol 1,4,5-trisphosphate, mobilization of cytosolic Ca(2+) and the activation of protein kinase C. Phosphorylates pik3r1, the regulatory subunit of phosphatidylinositol 3-kinase, and thereby mediates activation of the AKT1 signaling pathway. Mediates activation of hras and of the MAP kinases mapk1/erk2 and/or mapk3/erk1. Promotes activation of STAT family members stat1, stat3 and stat5a and/or stat5b. Receptor signaling is down-regulated by protein phosphatases that dephosphorylate the receptor and its down-stream effectors, and by rapid internalization of the activated receptor. The polypeptide is Platelet-derived growth factor receptor alpha (pdgfra) (Takifugu rubripes (Japanese pufferfish)).